Consider the following 184-residue polypeptide: ATP synthase subunit b (184 aa).

Residues 16–36 (LIPPIPELVIGLIAFVIVFGF) form a helical membrane-spanning segment.

It belongs to the ATPase B chain family. F-type ATPases have 2 components, F(1) - the catalytic core - and F(0) - the membrane proton channel. F(1) has five subunits: alpha(3), beta(3), gamma(1), delta(1), epsilon(1). F(0) has three main subunits: a(1), b(2) and c(10-14). The alpha and beta chains form an alternating ring which encloses part of the gamma chain. F(1) is attached to F(0) by a central stalk formed by the gamma and epsilon chains, while a peripheral stalk is formed by the delta and b chains.

It is found in the cell membrane. Its function is as follows. F(1)F(0) ATP synthase produces ATP from ADP in the presence of a proton or sodium gradient. F-type ATPases consist of two structural domains, F(1) containing the extramembraneous catalytic core and F(0) containing the membrane proton channel, linked together by a central stalk and a peripheral stalk. During catalysis, ATP synthesis in the catalytic domain of F(1) is coupled via a rotary mechanism of the central stalk subunits to proton translocation. Component of the F(0) channel, it forms part of the peripheral stalk, linking F(1) to F(0). This chain is ATP synthase subunit b, found in Streptomyces coelicolor (strain ATCC BAA-471 / A3(2) / M145).